We begin with the raw amino-acid sequence, 336 residues long: CMP-sialic acid transporter (336 aa).

Topologically, residues 1–9 (MAQARENVS) are cytoplasmic. A helical membrane pass occupies residues 10–30 (LFFKLYCLAVMTLVAAAYTVA). Topologically, residues 31 to 45 (LRYTRTTAKELYFST) are lumenal. The chain crosses the membrane as a helical span at residues 46–64 (TAVCVTEVIKLLISVGLLA). Lys-55 is a CMP-N-acetyl-beta-neuraminate binding site. At 65 to 87 (KETGSLGRFKASLSENVLGSPKE) the chain is on the cytoplasmic side. A helical membrane pass occupies residues 88–108 (LMKLSVPSLVYAVQNNMAFLA). CMP-N-acetyl-beta-neuraminate is bound at residue 101-102 (QN). Topologically, residues 109 to 114 (LSNLDA) are lumenal. Residues 115–135 (AVYQVTYQLKIPCTALCTVLM) traverse the membrane as a helical segment. 117–124 (YQVTYQLK) contacts CMP-N-acetyl-beta-neuraminate. Residues 136–141 (LNRTLS) lie on the Cytoplasmic side of the membrane. The chain crosses the membrane as a helical span at residues 142–160 (KLQWVSVFMLCGGVILVQW). Residues 161-175 (KPAQATKVVVEQSPL) lie on the Lumenal side of the membrane. A helical membrane pass occupies residues 176–196 (LGFGAIAIAVLCSGFAGVYFE). Ser-188 is a binding site for CMP-N-acetyl-beta-neuraminate. Residues 197–209 (KVLKSSDTSLWVR) lie on the Cytoplasmic side of the membrane. Position 210–214 (210–214 (NIQMY)) interacts with CMP-N-acetyl-beta-neuraminate. The chain crosses the membrane as a helical span at residues 210-228 (NIQMYLSGIVVTLVGTYLS). Residues 229 to 243 (DGAEIKEKGFFYGYT) lie on the Lumenal side of the membrane. Residues 244–262 (YYVWFVIFLASVGGLYTSV) traverse the membrane as a helical segment. The Cytoplasmic segment spans residues 263-269 (VVKYTDN). Residues 270–288 (IMKGFSAAAAIVLSTIASV) form a helical membrane-spanning segment. Lys-272 provides a ligand contact to CMP-N-acetyl-beta-neuraminate. At 289 to 296 (MLFGLQIT) the chain is on the lumenal side. Residues 297 to 315 (LSFAMGALLVCISIYLYGL) traverse the membrane as a helical segment. The Cytoplasmic portion of the chain corresponds to 316 to 336 (PRQDTTCIQQEATSKERVIGV). The segment at 316-336 (PRQDTTCIQQEATSKERVIGV) is disordered.

Belongs to the nucleotide-sugar transporter family. SLC35A subfamily. Monomer.

The protein localises to the golgi apparatus membrane. The enzyme catalyses CMP-N-acetyl-beta-neuraminate(in) + CMP(out) = CMP-N-acetyl-beta-neuraminate(out) + CMP(in). It catalyses the reaction CMP-N-acetyl-beta-neuraminate(in) + AMP(out) = CMP-N-acetyl-beta-neuraminate(out) + AMP(in). It carries out the reaction CDP-L-ribitol(in) + CDP(out) = CDP-L-ribitol(out) + CDP(in). The catalysed reaction is UMP(out) + CMP-N-acetyl-beta-neuraminate(in) = UMP(in) + CMP-N-acetyl-beta-neuraminate(out). Transports CMP-sialic acid from the cytosol into the Golgi apparatus, functioning as an antiporter that exchanges CMP-sialic acid for CMP. Binds both CMP-sialic acid and free CMP, but has higher affinity for free CMP. Also able to exchange CMP-sialic acid for AMP and UMP. Also mediates the transport of CDP-ribitol. This Cricetulus griseus (Chinese hamster) protein is CMP-sialic acid transporter (SLC35A1).